The primary structure comprises 37 residues: Large ribosomal subunit protein bL36 (37 aa).

This sequence belongs to the bacterial ribosomal protein bL36 family.

The chain is Large ribosomal subunit protein bL36 from Syntrophotalea carbinolica (strain DSM 2380 / NBRC 103641 / GraBd1) (Pelobacter carbinolicus).